A 185-amino-acid chain; its full sequence is Photosystem I assembly protein Ycf4 (185 aa).

A run of 2 helical transmembrane segments spans residues 21-43 (NFCWAFLLFLGSLGFVLVGTSSY) and 63-85 (GLVMSFYGIAGLFISCYLWCTIL).

The protein belongs to the Ycf4 family.

The protein localises to the plastid. It is found in the chloroplast thylakoid membrane. Seems to be required for the assembly of the photosystem I complex. The sequence is that of Photosystem I assembly protein Ycf4 from Brassica oleracea (Wild cabbage).